The following is a 571-amino-acid chain: 2-succinyl-5-enolpyruvyl-6-hydroxy-3-cyclohexene-1-carboxylate synthase (571 aa).

The protein belongs to the TPP enzyme family. MenD subfamily. Homodimer. Mg(2+) is required as a cofactor. It depends on Mn(2+) as a cofactor. The cofactor is thiamine diphosphate.

The catalysed reaction is isochorismate + 2-oxoglutarate + H(+) = 5-enolpyruvoyl-6-hydroxy-2-succinyl-cyclohex-3-ene-1-carboxylate + CO2. The protein operates within quinol/quinone metabolism; 1,4-dihydroxy-2-naphthoate biosynthesis; 1,4-dihydroxy-2-naphthoate from chorismate: step 2/7. It participates in quinol/quinone metabolism; menaquinone biosynthesis. Functionally, catalyzes the thiamine diphosphate-dependent decarboxylation of 2-oxoglutarate and the subsequent addition of the resulting succinic semialdehyde-thiamine pyrophosphate anion to isochorismate to yield 2-succinyl-5-enolpyruvyl-6-hydroxy-3-cyclohexene-1-carboxylate (SEPHCHC). In Lysinibacillus sphaericus (strain C3-41), this protein is 2-succinyl-5-enolpyruvyl-6-hydroxy-3-cyclohexene-1-carboxylate synthase.